Consider the following 248-residue polypeptide: uncharacterized protein (248 aa).

Positions 1–26 are cleaved as a signal peptide; that stretch reads MVAPRISPKIVLVGFALFAIISASLA.

This is an uncharacterized protein from Acanthamoeba polyphaga mimivirus (APMV).